The chain runs to 335 residues: Malate dehydrogenase (335 aa).

Position 11–17 (11–17 (GAAGQIG)) interacts with NAD(+). The substrate site is built by Arg-94 and Arg-100. NAD(+) is bound by residues Asn-107, Gln-114, and 131-133 (VGN). Residues Asn-133 and Arg-167 each coordinate substrate. The Proton acceptor role is filled by His-192.

It belongs to the LDH/MDH superfamily. MDH type 2 family.

The enzyme catalyses (S)-malate + NAD(+) = oxaloacetate + NADH + H(+). Catalyzes the reversible oxidation of malate to oxaloacetate. In Bdellovibrio bacteriovorus (strain ATCC 15356 / DSM 50701 / NCIMB 9529 / HD100), this protein is Malate dehydrogenase.